The following is a 362-amino-acid chain: Phospho-N-acetylmuramoyl-pentapeptide-transferase (362 aa).

10 helical membrane passes run 28-48 (AACMTALIVSFLLGPALIRWL), 72-92 (GTPTMGGVLILAATGISTLLW), 100-120 (VWAVLLLTLGYGGIGFADDYL), 134-154 (VKLIGQAVIGLIAAIWIMSLT), 170-190 (VLIPLGFAFPLFGMLVAMGAS), 201-221 (GLAIVPTIIAAGVFALIAYLV), 241-261 (LTVFCSALIGAGLGFLWFNAP), 265-285 (VFMGDTGSLALGGALGGVAIA), 290-310 (IVLAIVGGLFVVETISVIVQV), and 339-359 (TIVIRFWIVSFILALAGLATL).

This sequence belongs to the glycosyltransferase 4 family. MraY subfamily. The cofactor is Mg(2+).

Its subcellular location is the cell inner membrane. It catalyses the reaction UDP-N-acetyl-alpha-D-muramoyl-L-alanyl-gamma-D-glutamyl-meso-2,6-diaminopimeloyl-D-alanyl-D-alanine + di-trans,octa-cis-undecaprenyl phosphate = di-trans,octa-cis-undecaprenyl diphospho-N-acetyl-alpha-D-muramoyl-L-alanyl-D-glutamyl-meso-2,6-diaminopimeloyl-D-alanyl-D-alanine + UMP. Its pathway is cell wall biogenesis; peptidoglycan biosynthesis. Functionally, catalyzes the initial step of the lipid cycle reactions in the biosynthesis of the cell wall peptidoglycan: transfers peptidoglycan precursor phospho-MurNAc-pentapeptide from UDP-MurNAc-pentapeptide onto the lipid carrier undecaprenyl phosphate, yielding undecaprenyl-pyrophosphoryl-MurNAc-pentapeptide, known as lipid I. This chain is Phospho-N-acetylmuramoyl-pentapeptide-transferase, found in Granulibacter bethesdensis (strain ATCC BAA-1260 / CGDNIH1).